We begin with the raw amino-acid sequence, 210 residues long: MVKYPSGSLAAFRKPINKKENEIRHTYTHRKGVNFSDRGMTLEQQINESNKYYLNEEIAVVHKKPTPIQIVKVDYPKRSKAVIREAYFRQASTTDYNGVYKGYYLDFEAKETRNKTNFPLKNFHEHQIFHLSACLKQKGFCFTIIRFASLERYFVTPASFVINAWREKDKSSMTLKEIEDNSYEIKSGFRPTLPYLKAVDNFIADREREL.

Positions 93, 95, 108, and 127 each coordinate Mg(2+).

Belongs to the RecU family. Mg(2+) serves as cofactor.

The protein resides in the cytoplasm. The enzyme catalyses Endonucleolytic cleavage at a junction such as a reciprocal single-stranded crossover between two homologous DNA duplexes (Holliday junction).. Endonuclease that resolves Holliday junction intermediates in genetic recombination. Cleaves mobile four-strand junctions by introducing symmetrical nicks in paired strands. Promotes annealing of linear ssDNA with homologous dsDNA. Required for DNA repair, homologous recombination and chromosome segregation. In Lactobacillus helveticus (strain DPC 4571), this protein is Holliday junction resolvase RecU.